A 116-amino-acid polypeptide reads, in one-letter code: Ferredoxin-thioredoxin reductase, catalytic chain (116 aa).

C57 contacts [4Fe-4S] cluster. C59 serves as the catalytic Nucleophile. C59 and C89 form a disulfide bridge. [4Fe-4S] cluster contacts are provided by C76, C78, and C87.

Belongs to the ferredoxin thioredoxin reductase beta subunit family. In terms of assembly, heterodimer of subunit A (variable subunit) and subunit B (catalytic subunit). Heterodimeric FTR forms a complex with ferredoxin and thioredoxin. Requires [4Fe-4S] cluster as cofactor.

It is found in the plastid. Its subcellular location is the chloroplast. The enzyme catalyses [thioredoxin]-disulfide + 2 reduced [2Fe-2S]-[ferredoxin] + 2 H(+) = [thioredoxin]-dithiol + 2 oxidized [2Fe-2S]-[ferredoxin]. In terms of biological role, catalytic subunit of the ferredoxin-thioredoxin reductase (FTR), which catalyzes the two-electron reduction of thioredoxins by the electrons provided by reduced ferredoxin. The polypeptide is Ferredoxin-thioredoxin reductase, catalytic chain (ftrB) (Pyropia yezoensis (Susabi-nori)).